The primary structure comprises 252 residues: MTFLEEILAQKAVEVADMPLEKVAEKRKTYSFYEFLKANTNTMQLIAEVKRASPSKGEINMGVNPVLQAKSYQAAGAGMISVLTDPVFFKGSIEDLREVAKNVEIPVLCKDFIISEKQLIRARNAGATVVLLIISALTEEMLITLFEQALALDLEVLVEVHDQKELAVAQKIGAKLIGVNNRNLHTFEVDIAVSERLASDFSSDACFISESGFRTAEDVARVSQKYNAVLVGEALMREATPEAAAKSLKVTR.

This sequence belongs to the TrpC family.

It catalyses the reaction 1-(2-carboxyphenylamino)-1-deoxy-D-ribulose 5-phosphate + H(+) = (1S,2R)-1-C-(indol-3-yl)glycerol 3-phosphate + CO2 + H2O. It participates in amino-acid biosynthesis; L-tryptophan biosynthesis; L-tryptophan from chorismate: step 4/5. In Listeria monocytogenes serotype 4a (strain HCC23), this protein is Indole-3-glycerol phosphate synthase.